The chain runs to 250 residues: UPF0246 protein cce_3295 (250 aa).

Belongs to the UPF0246 family.

In Crocosphaera subtropica (strain ATCC 51142 / BH68) (Cyanothece sp. (strain ATCC 51142)), this protein is UPF0246 protein cce_3295.